The primary structure comprises 259 residues: DNA repair protein RecO (259 aa).

Belongs to the RecO family.

Involved in DNA repair and RecF pathway recombination. This chain is DNA repair protein RecO, found in Rhizobium rhizogenes (strain K84 / ATCC BAA-868) (Agrobacterium radiobacter).